Reading from the N-terminus, the 338-residue chain is Large ribosomal subunit protein uL10 (338 aa).

The interval 297-338 (PSAQQTQTQQSTAEEKKEEKKEEEKKGPSEEEIGSGLASLFG) is disordered. Residues 298–308 (SAQQTQTQQST) show a composition bias toward low complexity. Over residues 309–325 (AEEKKEEKKEEEKKGPS) the composition is skewed to basic and acidic residues.

Belongs to the universal ribosomal protein uL10 family. Part of the 50S ribosomal subunit. Forms part of the ribosomal stalk which helps the ribosome interact with GTP-bound translation factors. Forms a heptameric L10(L12)2(L12)2(L12)2 complex, where L10 forms an elongated spine to which the L12 dimers bind in a sequential fashion.

In terms of biological role, forms part of the ribosomal stalk, playing a central role in the interaction of the ribosome with GTP-bound translation factors. The protein is Large ribosomal subunit protein uL10 of Saccharolobus islandicus (strain M.14.25 / Kamchatka #1) (Sulfolobus islandicus).